The primary structure comprises 260 residues: Carbonic anhydrase 2 (260 aa).

S2 is modified (N-acetylserine). S2 is modified (phosphoserine). The 257-residue stretch at 3-259 (HHWGYGEHNG…LKNRQVRVFP (257 aa)) folds into the Alpha-carbonic anhydrase domain. Catalysis depends on H64, which acts as the Proton donor/acceptor. Zn(2+) contacts are provided by H94, H96, and H119. A phosphoserine mark is found at S165 and S172. A substrate-binding site is contributed by 198-199 (TN).

The protein belongs to the alpha-carbonic anhydrase family. As to quaternary structure, interacts with SLC4A4 and SLC26A6. Interaction with SLC4A7 regulates SLC4A7 transporter activity. Zn(2+) is required as a cofactor.

The protein resides in the cytoplasm. It is found in the cell membrane. It carries out the reaction hydrogencarbonate + H(+) = CO2 + H2O. The catalysed reaction is urea = cyanamide + H2O. With respect to regulation, inhibited by acetazolamide. Catalyzes the reversible hydration of carbon dioxide. Can also hydrate cyanamide to urea. Involved in the regulation of fluid secretion into the anterior chamber of the eye. Essential for bone resorption and osteoclast differentiation. Contributes to intracellular pH regulation in the duodenal upper villous epithelium during proton-coupled peptide absorption. Stimulates the chloride-bicarbonate exchange activity of SLC26A6. This Ovis aries (Sheep) protein is Carbonic anhydrase 2 (CA2).